Reading from the N-terminus, the 207-residue chain is Outer-membrane lipoprotein LolB (207 aa).

Positions 1 to 21 (MPQRKISFYRLLPLATLLLAA) are cleaved as a signal peptide. C22 carries the N-palmitoyl cysteine lipid modification. C22 carries the S-diacylglycerol cysteine lipid modification.

This sequence belongs to the LolB family. Monomer.

It is found in the cell outer membrane. Functionally, plays a critical role in the incorporation of lipoproteins in the outer membrane after they are released by the LolA protein. The polypeptide is Outer-membrane lipoprotein LolB (Yersinia enterocolitica serotype O:8 / biotype 1B (strain NCTC 13174 / 8081)).